We begin with the raw amino-acid sequence, 218 residues long: Small ribosomal subunit protein uS3c (218 aa).

Positions 47–117 (VRTHIRNSSN…KLKITLSEID (71 aa)) constitute a KH type-2 domain.

The protein belongs to the universal ribosomal protein uS3 family. As to quaternary structure, part of the 30S ribosomal subunit.

Its subcellular location is the plastid. It is found in the chloroplast. This Spirogyra maxima (Green alga) protein is Small ribosomal subunit protein uS3c (rps3).